Here is a 339-residue protein sequence, read N- to C-terminus: Protein H339R (339 aa).

This sequence belongs to the asfivirus H339R family. In terms of assembly, interacts with NACA (alpha chain of nascent polypeptide-associated complex).

It is found in the host cytoplasm. The protein localises to the host nucleus. Its subcellular location is the virion. This chain is Protein H339R, found in Ornithodoros (relapsing fever ticks).